The primary structure comprises 228 residues: MGEPQQVSALPIPPMQYIKEYTDENIRKSLAPKPPVPIKDSYMMFGNQFQCDDLIIRPLETQGIERLHPVQFDHKKELRKLLMSILVNFLDMLDILIRSPGSIRREEKLEDLKLLFVHMHHLINEYRPHQARETLRVMMEVQKRQRLETAERFQKHLERVVEMIQNCLASLPDDLPLPDGTVSVKTEPMDVQEPCTDHHEGPQGAAASVKEATIDKDAAMCGIIDEMT.

Belongs to the Mediator complex subunit 7 family. As to quaternary structure, component of the Mediator complex.

It is found in the nucleus. Its function is as follows. Component of the Mediator complex, a coactivator involved in the regulated transcription of nearly all RNA polymerase II-dependent genes. Mediator functions as a bridge to convey information from gene-specific regulatory proteins to the basal RNA polymerase II transcription machinery. Mediator is recruited to promoters by direct interactions with regulatory proteins and serves as a scaffold for the assembly of a functional preinitiation complex with RNA polymerase II and the general transcription factors. This chain is Mediator of RNA polymerase II transcription subunit 7-A (med7-a), found in Xenopus laevis (African clawed frog).